A 225-amino-acid chain; its full sequence is MIGWLQGQKVEAWQQGTRQGVVLACAGVGYEVQIAPRHLSEMEHGQNTFILWIHQVQRDDGSSLFGFPERRERDMFRTLIGVSGVGPQMALALLEECQTGELVEAIVQGDLRKLCQAQGVGKRTAERLAVELRTKLAEFSCRDPGMSLVDNGVIDSHQLKDSSLHELQITLGGLGYEDLEIRRAIRAVASGAAIGASDMPESVPSIDDTDAWLRASLRWLSQEAA.

Residues methionine 1–proline 68 form a domain I region. The interval glutamate 69 to serine 147 is domain II. The interval leucine 148 to glutamine 158 is flexible linker. Residues leucine 159–alanine 225 are domain III.

The protein belongs to the RuvA family. Homotetramer. Forms an RuvA(8)-RuvB(12)-Holliday junction (HJ) complex. HJ DNA is sandwiched between 2 RuvA tetramers; dsDNA enters through RuvA and exits via RuvB. An RuvB hexamer assembles on each DNA strand where it exits the tetramer. Each RuvB hexamer is contacted by two RuvA subunits (via domain III) on 2 adjacent RuvB subunits; this complex drives branch migration. In the full resolvosome a probable DNA-RuvA(4)-RuvB(12)-RuvC(2) complex forms which resolves the HJ.

The protein localises to the cytoplasm. The RuvA-RuvB-RuvC complex processes Holliday junction (HJ) DNA during genetic recombination and DNA repair, while the RuvA-RuvB complex plays an important role in the rescue of blocked DNA replication forks via replication fork reversal (RFR). RuvA specifically binds to HJ cruciform DNA, conferring on it an open structure. The RuvB hexamer acts as an ATP-dependent pump, pulling dsDNA into and through the RuvAB complex. HJ branch migration allows RuvC to scan DNA until it finds its consensus sequence, where it cleaves and resolves the cruciform DNA. The sequence is that of Holliday junction branch migration complex subunit RuvA from Prochlorococcus marinus (strain MIT 9313).